The following is a 147-amino-acid chain: Large ribosomal subunit protein uL15 (147 aa).

Residues 1–11 (MKLHDLRPAKD) show a composition bias toward basic and acidic residues. Residues 1–57 (MKLHDLRPAKDAKKKRKRVGRGTGSGRGFTSGRGSKGQNARSGGGVRPTFEGGQTPL) form a disordered region. Residues 21 to 35 (RGTGSGRGFTSGRGS) show a composition bias toward gly residues.

Belongs to the universal ribosomal protein uL15 family. In terms of assembly, part of the 50S ribosomal subunit.

Its function is as follows. Binds to the 23S rRNA. The protein is Large ribosomal subunit protein uL15 of Halothermothrix orenii (strain H 168 / OCM 544 / DSM 9562).